The sequence spans 106 residues: Small ribosomal subunit protein uS10 (106 aa).

The protein belongs to the universal ribosomal protein uS10 family. As to quaternary structure, part of the 30S ribosomal subunit.

Functionally, involved in the binding of tRNA to the ribosomes. The protein is Small ribosomal subunit protein uS10 of Pyrobaculum aerophilum (strain ATCC 51768 / DSM 7523 / JCM 9630 / CIP 104966 / NBRC 100827 / IM2).